A 228-amino-acid chain; its full sequence is 7-cyano-7-deazaguanine synthase (228 aa).

Residue 7–17 (LSGGLDSSTAL) coordinates ATP. C190, C202, C205, and C208 together coordinate Zn(2+).

Belongs to the QueC family. It depends on Zn(2+) as a cofactor.

The enzyme catalyses 7-carboxy-7-deazaguanine + NH4(+) + ATP = 7-cyano-7-deazaguanine + ADP + phosphate + H2O + H(+). Its pathway is purine metabolism; 7-cyano-7-deazaguanine biosynthesis. Functionally, catalyzes the ATP-dependent conversion of 7-carboxy-7-deazaguanine (CDG) to 7-cyano-7-deazaguanine (preQ(0)). This chain is 7-cyano-7-deazaguanine synthase, found in Acaryochloris marina (strain MBIC 11017).